The primary structure comprises 418 residues: UDP-N-acetylglucosamine 1-carboxyvinyltransferase (418 aa).

22–23 lines the phosphoenolpyruvate pocket; the sequence is KN. UDP-N-acetyl-alpha-D-glucosamine is bound at residue R92. Catalysis depends on C116, which acts as the Proton donor. C116 is subject to 2-(S-cysteinyl)pyruvic acid O-phosphothioketal. UDP-N-acetyl-alpha-D-glucosamine-binding positions include 121-125, D305, and L327; that span reads RPIDL.

This sequence belongs to the EPSP synthase family. MurA subfamily.

It is found in the cytoplasm. It catalyses the reaction phosphoenolpyruvate + UDP-N-acetyl-alpha-D-glucosamine = UDP-N-acetyl-3-O-(1-carboxyvinyl)-alpha-D-glucosamine + phosphate. It participates in cell wall biogenesis; peptidoglycan biosynthesis. Cell wall formation. Adds enolpyruvyl to UDP-N-acetylglucosamine. The sequence is that of UDP-N-acetylglucosamine 1-carboxyvinyltransferase from Campylobacter jejuni subsp. jejuni serotype O:6 (strain 81116 / NCTC 11828).